Consider the following 491-residue polypeptide: MKNQDQALIFEVSKEGRIGYSLPKLDVEEVKLEDVFESDYIRVEDAELPEVSELDIMRHYTALSNRNHGVDSGFYPLGSCTMKYNPKINESVARFAGFANIHPLQDEKTVQGAMELMYDLQEHLIEITGMDTVTLQPAAGAHGEWTGLMLIRAYHEANGDFNRTKVIVPDSAHGTNPASATVAGFETITVKSNEHGLVDLEDLKRVVNEETAALMLTNPNTLGLFEENILEMAEIVHNAGGKLYYDGANLNAVLSQARPGDMGFDVVHLNLHKTFTGPHGGGGPGSGPVGVKADLIPYLPKPILEKTENGYHFNYDRPEAIGRVKPFYGNFGINVRAYTYIRSMGPDGLRAVTEYAVLNANYMMRRLAPFYDLPFDRHCKHEFVLSGRRQKKLGVRTLDIAKRLLDFGYHPPTIYFPLNVEECIMIEPTETESKETLDGFIDKMIQIAKEVEENPEVVQEAPHTTVIKRLDETMAARKPVLRYAKPAPVQV.

N6-(pyridoxal phosphate)lysine is present on K273.

Belongs to the GcvP family. C-terminal subunit subfamily. In terms of assembly, the glycine cleavage system is composed of four proteins: P, T, L and H. In this organism, the P 'protein' is a heterodimer of two subunits. Pyridoxal 5'-phosphate is required as a cofactor.

It catalyses the reaction N(6)-[(R)-lipoyl]-L-lysyl-[glycine-cleavage complex H protein] + glycine + H(+) = N(6)-[(R)-S(8)-aminomethyldihydrolipoyl]-L-lysyl-[glycine-cleavage complex H protein] + CO2. In terms of biological role, the glycine cleavage system catalyzes the degradation of glycine. The P protein binds the alpha-amino group of glycine through its pyridoxal phosphate cofactor; CO(2) is released and the remaining methylamine moiety is then transferred to the lipoamide cofactor of the H protein. In Bacillus anthracis (strain A0248), this protein is Probable glycine dehydrogenase (decarboxylating) subunit 2.